Consider the following 634-residue polypeptide: (-)-limonene synthase, chloroplastic (634 aa).

The N-terminal 21 residues, 1–21 (MSPVSAIPLAYKLCLPRSLIS), are a transit peptide targeting the chloroplast. (2E)-geranyl diphosphate-binding residues include R348, D385, D389, R526, and G529. The Mg(2+) site is built by D385 and D389. Residues 385–389 (DDIYD) carry the DDXXD motif motif. Positions 529 and 537 each coordinate Mg(2+).

This sequence belongs to the terpene synthase family. Tpsb subfamily. Monomer. Mg(2+) serves as cofactor. Mn(2+) is required as a cofactor.

The protein resides in the plastid. It is found in the chloroplast. The enzyme catalyses (2E)-geranyl diphosphate = (4S)-limonene + diphosphate. It participates in secondary metabolite biosynthesis; terpenoid biosynthesis. Its pathway is terpene metabolism; oleoresin biosynthesis. Its function is as follows. Monoterpene synthase (mono-TPS) involved in the biosynthesis of monoterpene natural products. Catalyzes the conversion of (2E)-geranyl diphosphate (GPP) into (-)-limonene. Not able to use geranylgeranyl pyrophosphate (GGPP) and farnesyl pyrophosphate (FPP) as substrates. The sequence is that of (-)-limonene synthase, chloroplastic from Picea sitchensis (Sitka spruce).